Consider the following 341-residue polypeptide: MNLGDLTNFVEKPLAAVSNIVNTPNSAGRYRPFYLRNLLDAVQGRNLNDAVKGKVVLITGGSSGIGAAAAKKIAEAGGTVVLVARTLENLENVANDIRAIRGNGGTAHVYPCDLSDMDAIAVMADQVLGDLGGVDILINNAGRSIRRSLELSYDRIHDYQRTMQLNYLGAVQLILKFIPGMRERHFGHIVNVSSVGVQTRAPRFGAYIASKAALDSLCDALQAETVHDNVRFTTVHMALVRTPMISPTTIYDKFPTLTPDQAAGVITDAIVHRPRRASSPFGQFAAVADAVNPAVMDRVRNRAFNMFGDSSAAKGSESQTDTSELDKRSETFVRATRGIHW.

Ile-58 to Leu-82 lines the NADP(+) pocket. Residue Ser-194 coordinates substrate. The Proton acceptor role is filled by Tyr-207. The interval Asp-309–Ser-329 is disordered.

This sequence belongs to the short-chain dehydrogenases/reductases (SDR) family.

This is an uncharacterized protein from Mycobacterium bovis (strain ATCC BAA-935 / AF2122/97).